A 411-amino-acid chain; its full sequence is tRNA (uracil(54)-C(5))-methyltransferase (411 aa).

Positions 62, 68, 71, and 138 each coordinate [4Fe-4S] cluster. Residues Gln-254, Tyr-280, Thr-285, 301–302 (DS), Asp-328, and Asp-342 contribute to the S-adenosyl-L-methionine site. Cys-369 (nucleophile) is an active-site residue. Glu-402 serves as the catalytic Proton acceptor.

It belongs to the class I-like SAM-binding methyltransferase superfamily. RNA M5U methyltransferase family.

The catalysed reaction is uridine(54) in tRNA + S-adenosyl-L-methionine = 5-methyluridine(54) in tRNA + S-adenosyl-L-homocysteine + H(+). Catalyzes the formation of 5-methyl-uridine at position 54 (m5U54) in tRNA. This chain is tRNA (uracil(54)-C(5))-methyltransferase, found in Pyrococcus furiosus (strain ATCC 43587 / DSM 3638 / JCM 8422 / Vc1).